The following is a 661-amino-acid chain: Ecdysteroid-phosphate phosphatase (661 aa).

Residues 16 to 57 (KQDVSPLQILLQMGFRRQRALKALAATGNRSVQLASDWLLTH) enclose the UBA domain. An SH3 domain is found at 235-300 (ANHQVYKVTQ…PAVYTRRTAE (66 aa)). Arginine 409 is an active-site residue. Histidine 410 serves as the catalytic Tele-phosphohistidine intermediate. The active site involves histidine 590.

In terms of assembly, homodimer. Detected in non-diapause eggs, with highest expression between 2 and 5 days after oviposition. Not detected in other tissues tested.

Its subcellular location is the cytoplasm. The protein localises to the cytosol. It catalyses the reaction ecdysone 22-phosphate + H2O = ecdysone + phosphate. The catalysed reaction is 20-hydroxyecdysone 22-phosphate + H2O = 20-hydroxyecdysone + phosphate. It carries out the reaction 2-deoxyecdysone 22-phosphate + H2O = 2-deoxyecdysone + phosphate. The enzyme catalyses O-phospho-L-tyrosyl-[protein] + H2O = L-tyrosyl-[protein] + phosphate. Competitively inhibited by 4-nitrophenyl phosphate (para-nitrophenylphosphate, pNPP). Also inhibited by tungstate, vanadate, and phosphate. Functionally, steroid phosphatase which catalyzes the conversion of inactive phosphorylated ecdysteroids into their active forms. Shows high activity towards ecdysone 22-phosphate (E22P). Has lower activity towards other ecdysteriod phosphates including 20-hydroxyecdysone 22-phosphate (20E22P) and 2-deoxyecdysone 22-phosphate (2dE22P). Also has protein tyrosine phosphatase activity. The sequence is that of Ecdysteroid-phosphate phosphatase from Bombyx mori (Silk moth).